Consider the following 273-residue polypeptide: Ribosomal RNA small subunit methyltransferase A (273 aa).

6 residues coordinate S-adenosyl-L-methionine: N18, L20, G45, E66, D91, and N113.

This sequence belongs to the class I-like SAM-binding methyltransferase superfamily. rRNA adenine N(6)-methyltransferase family. RsmA subfamily.

The protein resides in the cytoplasm. The catalysed reaction is adenosine(1518)/adenosine(1519) in 16S rRNA + 4 S-adenosyl-L-methionine = N(6)-dimethyladenosine(1518)/N(6)-dimethyladenosine(1519) in 16S rRNA + 4 S-adenosyl-L-homocysteine + 4 H(+). Its function is as follows. Specifically dimethylates two adjacent adenosines (A1518 and A1519) in the loop of a conserved hairpin near the 3'-end of 16S rRNA in the 30S particle. May play a critical role in biogenesis of 30S subunits. The sequence is that of Ribosomal RNA small subunit methyltransferase A from Escherichia coli O157:H7.